The following is a 356-amino-acid chain: tRNA pseudouridine synthase D (356 aa).

The active-site Nucleophile is Asp84. The TRUD domain maps to 159–302; it reads GVPNYYGPQR…RRGARRPIRV (144 aa).

This sequence belongs to the pseudouridine synthase TruD family.

It carries out the reaction uridine(13) in tRNA = pseudouridine(13) in tRNA. Functionally, responsible for synthesis of pseudouridine from uracil-13 in transfer RNAs. In Thermus thermophilus (strain ATCC 27634 / DSM 579 / HB8), this protein is tRNA pseudouridine synthase D.